A 314-amino-acid chain; its full sequence is Ribosome maturation factor RimP (314 aa).

Disordered stretches follow at residues 1 to 20, 152 to 176, and 206 to 314; these read MDLDGKVQPPSAQVGQQPLS, PIEASSPIGGSKGALRLTRTDAKPE, and AAKA…PAPK. Over residues 10–19 the composition is skewed to polar residues; that stretch reads PSAQVGQQPL. Residues 215–227 show a composition bias toward acidic residues; it reads DGNNEEQDEEQEE. Polar residues predominate over residues 247 to 256; that stretch reads PEHNPAQNPI. Basic and acidic residues-rich tracts occupy residues 270–279 and 303–314; these read TEFKKSKTGE and SGHDMPRKPAPK.

This sequence belongs to the RimP family.

It localises to the cytoplasm. Its function is as follows. Required for maturation of 30S ribosomal subunits. The sequence is that of Ribosome maturation factor RimP from Beijerinckia indica subsp. indica (strain ATCC 9039 / DSM 1715 / NCIMB 8712).